The following is a 453-amino-acid chain: Tol-Pal system protein TolB (453 aa).

The first 31 residues, 1-31, serve as a signal peptide directing secretion; sequence MINNLSISMTKVIKIILAIIIILFNTLSIFA.

It belongs to the TolB family. As to quaternary structure, the Tol-Pal system is composed of five core proteins: the inner membrane proteins TolA, TolQ and TolR, the periplasmic protein TolB and the outer membrane protein Pal. They form a network linking the inner and outer membranes and the peptidoglycan layer.

Its subcellular location is the periplasm. Functionally, part of the Tol-Pal system, which plays a role in outer membrane invagination during cell division and is important for maintaining outer membrane integrity. The polypeptide is Tol-Pal system protein TolB (Orientia tsutsugamushi (strain Ikeda) (Rickettsia tsutsugamushi)).